The following is a 365-amino-acid chain: MGSTGETQMTPTQVSDEEAHLFAMQLASASVLPMILKTAIELDLLEIMAKAGPGAFLSTSEIASHLPTKNPDAPVMLDRILRLLASYSILTCSLKDLPDGKVERLYGLAPVCKFLTKNEDGVSVSPLCLMNQDKVLMESWYYLKDAILDGGIPFNKAYGMTAFEYHGTDPRFNKVFNKGMSDHSTITMKKILETYKGFEGLTSLVDVGGGTGAVVNTIVSKYPSIKGINFDLPHVIEDAPSYPGVEHVGGDMFVSVPKADAVFMKWICHDWSDAHCLKFLKNCYDALPENGKVILVECILPVAPDTSLATKGVVHVDVIMLAHNPGGKERTEKEFEGLAKGAGFQGFEVMCCAFNTHVIEFRKKA.

130-136 lines the substrate pocket; the sequence is MNQDKVL. Positions 162–180 are substrate binding; the sequence is AFEYHGTDPRFNKVFNKGM. S-adenosyl-L-methionine-binding residues include glycine 208, aspartate 231, aspartate 251, methionine 252, and lysine 265. Residue histidine 269 is the Proton acceptor of the active site.

Belongs to the class I-like SAM-binding methyltransferase superfamily. Cation-independent O-methyltransferase family. COMT subfamily. Homodimer. In terms of processing, the N-terminus is blocked. As to expression, xylem.

The enzyme catalyses (E)-caffeate + S-adenosyl-L-methionine = (E)-ferulate + S-adenosyl-L-homocysteine + H(+). It functions in the pathway aromatic compound metabolism; phenylpropanoid biosynthesis. In terms of biological role, catalyzes the conversion of caffeic acid to ferulic acid and of 5-hydroxyferulic acid to sinapic acid. The resulting products may subsequently be converted to the corresponding alcohols that are incorporated into lignins. The protein is Caffeic acid 3-O-methyltransferase 1 (OMT1) of Populus tremuloides (Quaking aspen).